We begin with the raw amino-acid sequence, 324 residues long: NAC domain-containing protein 30 (324 aa).

The NAC domain maps to 9–158; sequence MPPGFRFHPT…GWVVCRAFRK (150 aa). A DNA-binding region spans residues 109–164; it reads IGMRKTLVYYKGRAPNGRKSDWIMHEYRLQNSELAPVQEEGWVVCRAFRKPIPNQR. Residues 232–244 are compositionally biased toward low complexity; sequence LPQLDSPSLSPSL. The tract at residues 232–259 is disordered; it reads LPQLDSPSLSPSLGTNKDQNESFEQEEE.

This sequence belongs to the plant vascular related NAC-domain protein family. In terms of assembly, forms homodimer and heterodimers with other VND proteins (e.g. NAC037/VND1, NAC076/VND2 and NAC105/VND3) via their N-termini. Interacts with NAC083/VNI2. As to expression, expressed in developing protoxylems in roots and shoots. Detected in root protoxylem poles and in vessels of protoxylems, outermost metaxylems, inner metaxylems, shoots and hypocotyls. Expressed in roots, hypocotyls, cotyledons and leaves. Accumulates in the xylem but not in interfascicular fibers or pith cells in inflorescence stems. Present in developing vessels of the secondary xylem in roots undergoing secondary growth.

Its subcellular location is the nucleus. In terms of biological role, transcription activator that binds to the secondary wall NAC binding element (SNBE), 5'-(T/A)NN(C/T)(T/C/G)TNNNNNNNA(A/C)GN(A/C/T)(A/T)-3', in the promoter of target genes (e.g. genes involved in secondary wall biosynthesis, cell wall modification such as xylan accumulation, and programmed cell death). Involved in xylem formation in roots and shoots, especially regulating protoxylem vessel differentiation by promoting immature xylem vessel-specific genes expression. Can activate the expression of several genes including XCP1, MYB46, NAC010/SND3, MYB103, MYB58, MYB63, MYB83, KNAT7, ASL19 and ASL20. Required for the soilborne fungal pathogen Verticillium longisporum-induced transdifferentiation of chloroplast-containing bundle sheath cells to functional xylem elements leading to stunted growth, vein clearing, and leaf chloroses, as well as xylem hyperplasia within the vasculature of leaves, hypocotyls, and roots due to reinitiation of cambial activity and transdifferentiation of xylem parenchyma cells. This developmental reprogramming also mediates an increased drought stress tolerance. This Arabidopsis thaliana (Mouse-ear cress) protein is NAC domain-containing protein 30.